The sequence spans 186 residues: Ribosome-recycling factor (186 aa).

It belongs to the RRF family.

It is found in the cytoplasm. Functionally, responsible for the release of ribosomes from messenger RNA at the termination of protein biosynthesis. May increase the efficiency of translation by recycling ribosomes from one round of translation to another. The polypeptide is Ribosome-recycling factor (Rickettsia conorii (strain ATCC VR-613 / Malish 7)).